Reading from the N-terminus, the 457-residue chain is Protein unc-93 homolog A (457 aa).

Transmembrane regions (helical) follow at residues 8–28, 42–62, 65–85, 86–106, and 140–160; these read VLVV…LQSL, ALST…PLLI, LGCK…SVGN, FFAS…GAAP, and IFFL…SLVF. N190 is a glycosylation site (N-linked (GlcNAc...) asparagine). The next 6 helical transmembrane spans lie at 202-222, 257-277, 291-311, 320-340, 344-364, and 395-415; these read TLLG…AAFL, LCLL…LSSE, FVGY…VLYG, AVLY…LLLW, ADHL…DAVW, and FVIA…YILL.

Belongs to the unc-93 family. Expressed in testis, small intestine, spleen, prostate and ovary.

Its subcellular location is the cell membrane. The protein is Protein unc-93 homolog A (UNC93A) of Homo sapiens (Human).